The chain runs to 182 residues: Ribosome hibernation promotion factor (182 aa).

It belongs to the HPF/YfiA ribosome-associated protein family. Long HPF subfamily. As to quaternary structure, interacts with 100S ribosomes.

It localises to the cytoplasm. Its function is as follows. Required for dimerization of active 70S ribosomes into 100S ribosomes in stationary phase; 100S ribosomes are translationally inactive and sometimes present during exponential growth. The chain is Ribosome hibernation promotion factor from Streptococcus pyogenes serotype M6 (strain ATCC BAA-946 / MGAS10394).